We begin with the raw amino-acid sequence, 528 residues long: MSGSDTAPFLSQADDTDDGPAPGTPGLPGSMGNPKSEDPAVPDQEGLQRITGLSSGHSALIVAVLCYINLLNYMDRFTVAGVLPDIEQFFDIGDGSSGLIQTVFISSYMVLAPVFGYLGDRYNRKYLMCGGIAFWSLVTLGSSFIPRERFWLLLLTRGLVGVGEASYSTIAPTLIADLFVADQRSRMLSVFYFAIPVGSGLGYIAGSKVKDVAGDWHWALRVTPGLGVLAVVLLFLVVQEPPRGAVERHSDSPPLNPTSWWADLRALARNPSFILSSLGFTAVAFVTGSLALWAPAFLLRSRVVLGETPPCLPGDSCSSSDSLIFGLITCLTGVLGVGLGVEISRRLRRTNPRADPLVCAAGLLGSAPFLFLALACARGSIVATYIFIFIGETLLSMNWAIVADILLYVVIPTRRSTAEAFQIVLSHLLGDAGSPYLIGSISDRLRRDWPPSFLSEFRALQFSLMLCAFVGALGGAAFLGTAIFIESDRRQAQLHVQGLLPETGPTDDRIVVPQRGRSTRVPVSSVLI.

Residues 1–44 (MSGSDTAPFLSQADDTDDGPAPGTPGLPGSMGNPKSEDPAVPDQ) form a disordered region. 12 helical membrane-spanning segments follow: residues 50 to 70 (ITGL…YINL), 98 to 118 (GLIQ…FGYL), 126 to 146 (YLMC…SFIP), 160 to 180 (VGVG…DLFV), 187 to 207 (MLSV…IAGS), 218 to 238 (WALR…FLVV), 278 to 298 (LGFT…PAFL), 323 to 343 (LIFG…GVEI), 357 to 377 (LVCA…LACA), 381 to 401 (IVAT…NWAI), 421 to 441 (FQIV…IGSI), and 465 to 485 (MLCA…AIFI). Ser518 carries the post-translational modification Phosphoserine.

This sequence belongs to the major facilitator superfamily. Spinster (TC 2.A.1.49) family. As to quaternary structure, interacts with BCL2 and BCL2L1.

It localises to the lysosome membrane. It carries out the reaction a 1-acyl-sn-glycero-3-phosphocholine(out) + H(+)(out) = a 1-acyl-sn-glycero-3-phosphocholine(in) + H(+)(in). The enzyme catalyses 1-hexadecanoyl-sn-glycero-3-phosphocholine(out) + H(+)(out) = 1-hexadecanoyl-sn-glycero-3-phosphocholine(in) + H(+)(in). The catalysed reaction is 1-(9Z-octadecenoyl)-sn-glycero-3-phosphocholine(out) + H(+)(out) = 1-(9Z-octadecenoyl)-sn-glycero-3-phosphocholine(in) + H(+)(in). It catalyses the reaction 1-(5Z,8Z,11Z,14Z-eicosatetraenoyl)-sn-glycero-3-phosphocholine(out) + H(+)(out) = 1-(5Z,8Z,11Z,14Z-eicosatetraenoyl)-sn-glycero-3-phosphocholine(in) + H(+)(in). It carries out the reaction 1-(4Z,7Z,10Z,13Z,16Z,19Z-docosahexaenoyl)-sn-glycero-3-phosphocholine(out) + H(+)(out) = 1-(4Z,7Z,10Z,13Z,16Z,19Z-docosahexaenoyl)-sn-glycero-3-phosphocholine(in) + H(+)(in). The enzyme catalyses a 1-acyl-sn-glycero-3-phosphoethanolamine(out) + H(+)(out) = a 1-acyl-sn-glycero-3-phosphoethanolamine(in) + H(+)(in). The catalysed reaction is 1-(9Z-octadecenoyl)-sn-glycero-3-phosphoethanolamine(out) + H(+)(out) = 1-(9Z-octadecenoyl)-sn-glycero-3-phosphoethanolamine(in) + H(+)(in). It catalyses the reaction 1-acyl-sn-glycero-3-phospho-(1'-sn-glycerol)(out) + H(+)(out) = 1-acyl-sn-glycero-3-phospho-(1'-sn-glycerol)(in) + H(+)(in). It carries out the reaction 1-(9Z-octadecenoyl)-sn-glycero-3-phospho-(1'-sn-glycerol)(out) + H(+)(out) = 1-(9Z-octadecenoyl)-sn-glycero-3-phospho-(1'-sn-glycerol)(in) + H(+)(in). The enzyme catalyses a 1-O-(1Z-alkenyl)-sn-glycero-3-phosphocholine(out) + H(+)(out) = a 1-O-(1Z-alkenyl)-sn-glycero-3-phosphocholine(in) + H(+)(in). The catalysed reaction is 1-(1Z-hexadecenyl)-sn-glycero-3-phosphocholine(out) + H(+)(out) = 1-(1Z-hexadecenyl)-sn-glycero-3-phosphocholine(in) + H(+)(in). It catalyses the reaction a 1-O-(1Z-alkenyl)-sn-glycero-3-phosphoethanolamine(out) + H(+)(out) = a 1-O-(1Z-alkenyl)-sn-glycero-3-phosphoethanolamine(in) + H(+)(in). It carries out the reaction 1-O-(1Z-hexadecenyl)-sn-glycero-3-phosphoethanolamine(out) + H(+)(out) = 1-O-(1Z-hexadecenyl)-sn-glycero-3-phosphoethanolamine(in) + H(+)(in). Its function is as follows. Plays a critical role in the phospholipid salvage pathway from lysosomes to the cytosol. Mediates the rate-limiting, proton-dependent, lysosomal efflux of lysophospholipids, which can then be reacylated by acyltransferases in the endoplasmic reticulum to form phospholipids. Selective for zwitterionic headgroups such as lysophosphatidylcholine (LPC) and lysophosphatidylethanolamine (LPE), can also transport lysophosphatidylglycerol (LPG), but not other anionic lysophospholipids, sphingosine, nor sphingomyelin. Transports lysophospholipids with saturated, monounsaturated, and polyunsaturated fatty acids, such as 1-hexadecanoyl-sn-glycero-3-phosphocholine, 1-(9Z-octadecenoyl)-sn-glycero-3-phosphocholine and 1-(4Z,7Z,10Z,13Z,16Z,19Z-docosahexaenoyl)-sn-glycero-3-phosphocholine, respectively. Can also transport lysoplasmalogen (LPC with a fatty alcohol) such as 1-(1Z-hexadecenyl)-sn-glycero-3-phosphocholine. Essential player in lysosomal homeostasis. Crucial for cell survival under conditions of nutrient limitation. May be involved in necrotic or autophagic cell death. The protein is Protein spinster homolog 1 (SPNS1) of Bos taurus (Bovine).